Consider the following 549-residue polypeptide: Glucose-6-phosphate isomerase (549 aa).

Catalysis depends on glutamate 355, which acts as the Proton donor. Catalysis depends on residues histidine 387 and lysine 515.

It belongs to the GPI family.

The protein resides in the cytoplasm. It carries out the reaction alpha-D-glucose 6-phosphate = beta-D-fructose 6-phosphate. It functions in the pathway carbohydrate biosynthesis; gluconeogenesis. Its pathway is carbohydrate degradation; glycolysis; D-glyceraldehyde 3-phosphate and glycerone phosphate from D-glucose: step 2/4. In terms of biological role, catalyzes the reversible isomerization of glucose-6-phosphate to fructose-6-phosphate. The protein is Glucose-6-phosphate isomerase of Histophilus somni (strain 2336) (Haemophilus somnus).